A 388-amino-acid chain; its full sequence is Succinate--CoA ligase [ADP-forming] subunit beta (388 aa).

One can recognise an ATP-grasp domain in the interval 9–244 (KEILRKFGVA…LDEEDPAEIE (236 aa)). ATP is bound by residues K46, 53 to 55 (GRG), E99, A102, and E107. Mg(2+) is bound by residues N199 and D213. Residues N264 and 321–323 (GIM) each bind substrate.

The protein belongs to the succinate/malate CoA ligase beta subunit family. As to quaternary structure, heterotetramer of two alpha and two beta subunits. Mg(2+) serves as cofactor.

It carries out the reaction succinate + ATP + CoA = succinyl-CoA + ADP + phosphate. It catalyses the reaction GTP + succinate + CoA = succinyl-CoA + GDP + phosphate. The protein operates within carbohydrate metabolism; tricarboxylic acid cycle; succinate from succinyl-CoA (ligase route): step 1/1. Functionally, succinyl-CoA synthetase functions in the citric acid cycle (TCA), coupling the hydrolysis of succinyl-CoA to the synthesis of either ATP or GTP and thus represents the only step of substrate-level phosphorylation in the TCA. The beta subunit provides nucleotide specificity of the enzyme and binds the substrate succinate, while the binding sites for coenzyme A and phosphate are found in the alpha subunit. This chain is Succinate--CoA ligase [ADP-forming] subunit beta, found in Burkholderia ambifaria (strain MC40-6).